Consider the following 187-residue polypeptide: dTTP/UTP pyrophosphatase (187 aa).

Residue aspartate 68 is the Proton acceptor of the active site.

The protein belongs to the Maf family. YhdE subfamily. Requires a divalent metal cation as cofactor.

It localises to the cytoplasm. It catalyses the reaction dTTP + H2O = dTMP + diphosphate + H(+). It carries out the reaction UTP + H2O = UMP + diphosphate + H(+). Its function is as follows. Nucleoside triphosphate pyrophosphatase that hydrolyzes dTTP and UTP. May have a dual role in cell division arrest and in preventing the incorporation of modified nucleotides into cellular nucleic acids. The protein is dTTP/UTP pyrophosphatase of Thermus thermophilus (strain ATCC BAA-163 / DSM 7039 / HB27).